A 468-amino-acid polypeptide reads, in one-letter code: PTS system mannitol-specific EIICB component (468 aa).

At 1–25 the chain is on the cytoplasmic side; it reads MNNQPSFRARVQKFGSFLSGMIMPN. The 331-residue stretch at 14-344 folds into the PTS EIIC type-2 domain; that stretch reads FGSFLSGMIM…ILKTSKATAE (331 aa). A helical membrane pass occupies residues 26–47; it reads IGAFIAWGLITALFIPTGWWPN. At 48–51 the chain is on the extracellular side; the sequence is EQLA. Residues 52–72 traverse the membrane as a helical segment; it reads ELVGPMITYLLPLLIGYTGGK. Residues 73 to 135 lie on the Cytoplasmic side of the membrane; it reads MIYDVRGGVV…SGFEMLVNNF (63 aa). A helical membrane pass occupies residues 136-157; that stretch reads SAGILAAILAIVAFLGIGPVVV. The Extracellular segment spans residues 158–166; it reads SFSNVLASG. The chain crosses the membrane as a helical span at residues 167–187; that stretch reads VEVIIGAGLLPLASIFIEPAK. The Cytoplasmic portion of the chain corresponds to 188-274; that stretch reads VLFLNNAINH…ILMKPTLILA (87 aa). Residues 275–294 form a helical membrane-spanning segment; that stretch reads VIAGGMSGVFTFVLFNAGLV. Topologically, residues 295–314 are extracellular; the sequence is AVPSPGSIFALLAMTPRGEY. A helical transmembrane segment spans residues 315 to 336; the sequence is AGVLAGVIIATVVSFVIASIIL. Over 337 to 468 the chain is Cytoplasmic; sequence KTSKATAEDL…YDELVNRLKS (132 aa). Residues 380-468 enclose the PTS EIIB type-2 domain; sequence NKIIFACDAG…YDELVNRLKS (89 aa). The active-site Phosphocysteine intermediate; for EIIB activity is C386. A Phosphocysteine; by EIIA modification is found at C386.

Homodimer.

Its subcellular location is the cell membrane. It catalyses the reaction D-mannitol(out) + N(pros)-phospho-L-histidyl-[protein] = D-mannitol 1-phosphate(in) + L-histidyl-[protein]. The phosphoenolpyruvate-dependent sugar phosphotransferase system (sugar PTS), a major carbohydrate active transport system, catalyzes the phosphorylation of incoming sugar substrates concomitantly with their translocation across the cell membrane. The enzyme II CmtAB PTS system is involved in D-mannitol transport. The chain is PTS system mannitol-specific EIICB component (mtlA) from Halalkalibacterium halodurans (strain ATCC BAA-125 / DSM 18197 / FERM 7344 / JCM 9153 / C-125) (Bacillus halodurans).